Reading from the N-terminus, the 516-residue chain is Putative fatty acyl-CoA reductase CG8306 (516 aa).

3 consecutive transmembrane segments (helical) span residues Trp-356–Val-376, Ile-471–Ile-491, and Gly-496–Leu-516.

This sequence belongs to the fatty acyl-CoA reductase family.

Its subcellular location is the membrane. It carries out the reaction a long-chain fatty acyl-CoA + 2 NADPH + 2 H(+) = a long-chain primary fatty alcohol + 2 NADP(+) + CoA. Functionally, catalyzes the reduction of C16 or C18 fatty acyl-CoA to fatty alcohols. The polypeptide is Putative fatty acyl-CoA reductase CG8306 (Drosophila melanogaster (Fruit fly)).